A 796-amino-acid polypeptide reads, in one-letter code: MASKSDKQVTVEVNNNGRNRSKSRARSQSRGRGRSVKITVNSHNKGRRQNGRNKYQSNQRVRKIVNKQLRKQGVTGPKPAICQRATATLGTIGTNTTGATEIEACILLNPVLVKDATGSTQFGPVQALGAQYSMWKLKYLNVKLTSMVGASAVNGTVLRISLNPTSTPSSTSWSGLGARKHMDVTVGRNAVFKLRPSDLGGPRDGWWLTNTNDNASDTLGPSIEIHTLGKTMSSYKNEQFTGGLFLVELASEWCFTGYAANPNLVNLVKSTDHEVNVTFEGSKGTPLIMNVAEHSHFARMAEQHSSISTTFSRAGGDATSDTVWQVLNTAVSAAELVAPPPFNWLIKGGWWFVKLIAGRTRTGTKQFYVYPSYQDALSNKPALCTGGVTGGVLRTTPVTTLQFTQMNQPSLGHGEHTATIGSIVQDPSGELRVLLTVGSIMSPNSADRQVWLNKTLTAPGTNSNDNLVKIAHDLGHYLIMQGFMHIKTVEWYTPDFQPSRDPTPIAGMSVMVNITKKADVYFMKQFKNSYTNNRHQITSIFLIKPLADFKVQCYMSYFKRESHDNDGVANLTVRSMTSPETIRFQVGEWYLLTSTTLKENNLPEGWVWDRVELKSDTPYYADQALTYFITPPPVDSQILFEGNTTLPRISSPPDNPSGRYMESHQQDCDSSDDEDDCENVSEETETEDEEDEDEDDEADRFDLHSPYSSEPEDSDENNRVTLLSTLINQGMTVERATRITKRAFPTCAEKLKRSVYMDLLASGASPSSAWSNACDEARNVGSNQLAKLSGDRGHAE.

The interval 1-59 is disordered; the sequence is MASKSDKQVTVEVNNNGRNRSKSRARSQSRGRGRSVKITVNSHNKGRRQNGRNKYQSNQ. The interval 1 to 70 is basic; it reads MASKSDKQVT…VRKIVNKQLR (70 aa). Over residues 19–35 the composition is skewed to basic residues; that stretch reads NRSKSRARSQSRGRGRS. Residues 71 to 263 form an inner core region; that stretch reads KQGVTGPKPA…CFTGYAANPN (193 aa). The interval 274-313 is lipid disruption activity; sequence EVNVTFEGSKGTPLIMNVAEHSHFARMAEQHSSISTTFSR. Residues 395–422 form a core attachment region; it reads TTPVTTLQFTQMNQPSLGHGEHTATIGS. Residues 423-650 form a P2 globular domain region; it reads IVQDPSGELR…EGNTTLPRIS (228 aa). The tract at residues 644 to 718 is disordered; the sequence is TTLPRISSPP…SEPEDSDENN (75 aa). The interval 651–796 is acidic; it reads SPPDNPSGRY…KLSGDRGHAE (146 aa). The segment covering 669 to 699 has biased composition (acidic residues); sequence DSSDDEDDCENVSEETETEDEEDEDEDDEAD.

In terms of assembly, heterodimer with spike protein VP27. The spikes form a globular dimer with 30 spikes covering the mature virion. Spike protein VP25 that lacks the core attachment region may need to dimerize with spike protein VP27 to remain stably bound to the viral particle. Does not interact with host PDIA4 during virus entry as it is the case for other strains. Heterodimer with spike protein VP25. The spikes form a globular dimer with 30 spikes covering the mature virion. Spike protein VP25 that lacks the core attachment region may need to dimerize with spike protein VP27 to remain stably bound to the viral particle. In terms of processing, specific enzymatic cleavages by the host yield mature proteins. VP90 acidic C-terminal domain is eliminated from the immature virion by host caspases during viral maturation giving rise to virions composed of VP70. The virus can then dissociate from cellular membranes and exit the cell. Further cleavages by host extracellular proteases occur resulting in the three structural proteins VP34, VP27 and VP25 and conferring infectivity.

It localises to the virion. It is found in the host extracellular space. Its function is as follows. The capsid polyprotein VP90 self-assembles and undergoes a proteolytic cleavage by host caspases to yield the immature VP70 virion. The immature virion is composed of 180 VP70 subunits with 90 dimeric spikes and displays a T=3 icosahedral symmetry. During maturation, VP70 undergoes a loss of 60 peripentonal spikes, which likely plays an important role in viral infectivity. Functionally, self-assembles to form an icosahedral capsid with a T=3 symmetry, about 43 nm in diameter. This forms contains only 30 spikes located on the icosahedral 2-fold axes. In terms of biological role, VP25 and VP27 Forms the spikes at the surface of the virion. This forms contains only 30 spikes located on the icosahedral 2-fold axes. Plays a role in the attachment to target host cell. This attachment induces virion internalization through clathrin-dependent endocytosis. Its function is as follows. VP25 and VP27 Forms the spikes at the surface of the virion. This forms contains only 30 spikes located on the icosahedral 2-fold axes. Plays a role in the attachment to target host cell. This attachment induces virion internalization through clathrin-dependent endocytosis. This chain is Capsid polyprotein VP90, found in Human astrovirus-2 (HAstV-2).